Here is a 218-residue protein sequence, read N- to C-terminus: MTSLSQEALLVRAALEAEGLETPLVANALNGQQKKEKIEGHMRAIMETLGLDLTDDSLAETPHRIAKMYVNEIFSGLDYSTFPKVTVIENKMKVDEMIMVRDISLTSTCEHHFVTIDGLAHVAYIPRGKVIGLSKINRIVQFFARRPQVQERLTQQILLALQTLLGTKDVAISIKATHFCVKARGVMDSTSYTTTTSLGGVFKTQPDTRAEFLGGLKG.

Zn(2+) is bound by residues cysteine 109, histidine 112, and cysteine 180.

This sequence belongs to the GTP cyclohydrolase I family. In terms of assembly, toroid-shaped homodecamer, composed of two pentamers of five dimers.

The enzyme catalyses GTP + H2O = 7,8-dihydroneopterin 3'-triphosphate + formate + H(+). Its pathway is cofactor biosynthesis; 7,8-dihydroneopterin triphosphate biosynthesis; 7,8-dihydroneopterin triphosphate from GTP: step 1/1. The polypeptide is GTP cyclohydrolase 1 (Aeromonas salmonicida (strain A449)).